We begin with the raw amino-acid sequence, 129 residues long: Glycine cleavage system H protein (129 aa).

The Lipoyl-binding domain maps to 24–106 (SYTVGITEHA…FGDGWFFRVM (83 aa)). At lysine 65 the chain carries N6-lipoyllysine.

This sequence belongs to the GcvH family. In terms of assembly, the glycine cleavage system is composed of four proteins: P, T, L and H. The cofactor is (R)-lipoate.

Its function is as follows. The glycine cleavage system catalyzes the degradation of glycine. The H protein shuttles the methylamine group of glycine from the P protein to the T protein. This chain is Glycine cleavage system H protein, found in Shewanella frigidimarina (strain NCIMB 400).